We begin with the raw amino-acid sequence, 278 residues long: Cytidine kinase (278 aa).

203-208 (TRGEKG) lines the ATP pocket. The active-site Proton acceptor is Asp237.

This sequence belongs to the carbohydrate kinase PfkB family. Mg(2+) is required as a cofactor.

The catalysed reaction is cytidine + ATP = CMP + ADP + H(+). Functionally, involved in nucleoside degradation. Phosphorylates cytidine to CMP. Can also act on deoxycytidine and uridine, but is most active with cytidine. ATP is the most preferred phosphate donor, but it can also use GTP, CTP or UTP. The polypeptide is Cytidine kinase (Thermococcus kodakarensis (strain ATCC BAA-918 / JCM 12380 / KOD1) (Pyrococcus kodakaraensis (strain KOD1))).